A 425-amino-acid chain; its full sequence is uncharacterized protein (425 aa).

This is an uncharacterized protein from Salmonella typhimurium (strain LT2 / SGSC1412 / ATCC 700720).